The primary structure comprises 249 residues: Pleckstrin homology domain-containing family F member 2 (249 aa).

Ser-16 is modified (phosphoserine). Residues 35–131 form the PH domain; that stretch reads VLIGEGVLTK…WMNHINKCVT (97 aa). Lys-44 is modified (N6-acetyllysine). Residues 152-212 form an FYVE-type zinc finger; that stretch reads DSEATVCMRC…ICDFCYDLLS (61 aa). Cys-158, Cys-161, Cys-175, Cys-178, Cys-183, Cys-186, Cys-204, and Cys-207 together coordinate Zn(2+). Over residues 221–233 the composition is skewed to polar residues; that stretch reads PARSDSYSQSLKS. The segment at 221 to 249 is disordered; the sequence is PARSDSYSQSLKSPLNDMSDDDDDDDSSD. Residues 238-249 show a composition bias toward acidic residues; sequence MSDDDDDDDSSD. A phosphoserine mark is found at Ser-239 and Ser-248.

In terms of assembly, may interact with EEA1. Expressed in placenta, ovary and small intestine, as well as in heart and pancreas. Also expressed in peripheral blood mononuclear cells and dendritic cells.

The protein localises to the early endosome membrane. The protein resides in the endoplasmic reticulum. Functionally, may play a role in early endosome fusion upstream of RAB5, hence regulating receptor trafficking and fluid-phase transport. Enhances cellular sensitivity to TNF-induced apoptosis. The protein is Pleckstrin homology domain-containing family F member 2 (PLEKHF2) of Homo sapiens (Human).